We begin with the raw amino-acid sequence, 1216 residues long: Coatomer subunit alpha-1 (1216 aa).

8 WD repeats span residues 7 to 48 (TKSN…DRFD), 49 to 88 (EHEGPVRGVHFHNSQPLFVSGGDDYKIKVWNYKNHRCLFT), 91 to 132 (GHLD…SVLT), 133 to 172 (GHNHYVMCASFHPKEDLVVSASLDQTVRVWDIGALRKKTV), 202 to 241 (GHDRGVNWAAFHPTLPLIVSGADDRQVKLWRMNETKAWEV), 246 to 285 (GHMNNVSSVMFHAKQDIIVSNSEDKSIRVWDATKRTGLQT), 288 to 326 (REHDRFWILAVHPEMNLLAAGHDSGMIVFKLERERPAFA), and 363 to 404 (SLNQ…VGRS).

As to quaternary structure, oligomeric complex that consists of at least the alpha, beta, beta', gamma, delta, epsilon and zeta subunits.

Its subcellular location is the cytoplasm. The protein resides in the golgi apparatus membrane. The protein localises to the cytoplasmic vesicle. It localises to the COPI-coated vesicle membrane. In terms of biological role, the coatomer is a cytosolic protein complex that binds to dilysine motifs and reversibly associates with Golgi non-clathrin-coated vesicles, which further mediate biosynthetic protein transport from the ER, via the Golgi up to the trans Golgi network. Coatomer complex is required for budding from Golgi membranes, and is essential for the retrograde Golgi-to-ER transport of dilysine-tagged proteins. This is Coatomer subunit alpha-1 from Arabidopsis thaliana (Mouse-ear cress).